Here is a 628-residue protein sequence, read N- to C-terminus: DNA primase (628 aa).

Residues 40–64 (CPFHEERSPSFSVAEDKQIFHCFGC) form a CHC2-type zinc finger. Residues 269–351 (NTVLLFEGFM…DLSIVSIPEK (83 aa)) form the Toprim domain. The Mg(2+) site is built by Glu275, Asp319, and Asp321.

Belongs to the DnaG primase family. Monomer. Interacts with DnaB. The cofactor is Zn(2+). Requires Mg(2+) as cofactor.

The catalysed reaction is ssDNA + n NTP = ssDNA/pppN(pN)n-1 hybrid + (n-1) diphosphate.. Functionally, RNA polymerase that catalyzes the synthesis of short RNA molecules used as primers for DNA polymerase during DNA replication. In Enterococcus faecalis (strain ATCC 700802 / V583), this protein is DNA primase.